A 768-amino-acid polypeptide reads, in one-letter code: Multidomain esterase (768 aa).

The first 40 residues, 1-40, serve as a signal peptide directing secretion; the sequence is MKKHFVVGETIKRFLRIGTSLALSISTLSLLPSAPRLSSA. The interval 41 to 264 is acetylxylan esterase; it reads AGTIKIMPLG…YWLEQIEGYL (224 aa). The active-site Nucleophile; for acetylxylan esterase activity is serine 68. Catalysis depends on for acetylxylan esterase activity residues aspartate 240 and histidine 243. Over residues 267 to 283 the composition is skewed to low complexity; sequence SDGPQQTQPTQPSQGDS. The segment at 267 to 289 is disordered; that stretch reads SDGPQQTQPTQPSQGDSGPELIY. Residues 285-352 form the Dockerin domain; the sequence is PELIYGDLDG…IIGKIKEFTV (68 aa). The tract at residues 353-768 is glucuronoyl esterase; sequence AEKTVTEKPV…ADTFASKWLY (416 aa). The GXSYXG catalytic site motif signature appears at 563–568; the sequence is GVSRYG. Catalysis depends on serine 565, which acts as the Nucleophile; for glucuronoyl esterase activity. Residues lysine 569, glutamate 633, and tryptophan 679 each contribute to the substrate site.

The protein in the N-terminal section; belongs to the carbohydrate esterase 3 (CE3) family. This sequence in the C-terminal section; belongs to the carbohydrate esterase 15 (CE15) family.

The protein resides in the secreted. The enzyme catalyses Deacetylation of xylans and xylo-oligosaccharides.. It catalyses the reaction a 4-O-methyl-alpha-D-glucuronosyl ester derivative + H2O = 4-O-methyl-alpha-D-glucuronate derivative + an alcohol + H(+). It participates in glycan degradation; xylan degradation. Esterase involved in the degradation of plant cell wall polysaccharides. Catalyzes the deacetylation of chemically acetylated xylan and native, steam-extracted xylan. Seems to act in synergy with the xylanase XynD which produces xylo-oligosaccharides. Also catalyzes the deesterification of methyl esters of 4-O-methyl-D-glucuronic acid (MeGlcA) side residues in synthetic glucuronoxylan methyl ester, suggesting that it may be able to cleave ester linkages between MeGlcA carboxyl and more complex alcohols, including linkages between hemicellulose and lignin alcohols in plant cell walls. The polypeptide is Multidomain esterase (Ruminococcus flavefaciens).